Here is a 264-residue protein sequence, read N- to C-terminus: Apolipoprotein A-I (264 aa).

Positions 1-18 (MKAVVLAVAVLFLTGSQA) are cleaved as a signal peptide. Tandem repeats lie at residues 67–88 (LKLL…ADLG) and 89–110 (PVTQ…QEMN). The interval 67-264 (LKLLDNWDTL…DQATKQLTAQ (198 aa)) is 10 X approximate tandem repeats. Methionine sulfoxide is present on Met-109. The stretch at 111-121 (KDLQEVKQKVQ) is one 3; half-length repeat. A run of 5 repeats spans residues 122-143 (PYLD…EKVG), 144-165 (PLGT…EKLT), 166-187 (PLGE…TQLA), 188-207 (PYSD…LRDS), and 208-229 (TTFA…EKAK). The 9; half-length repeat unit spans residues 230-240 (PALEDLRQGLL). The stretch at 241–264 (PVLESLKASILSSIDQATKQLTAQ) is repeat 10.

Belongs to the apolipoprotein A1/A4/E family. Homodimer. Interacts with APOA1BP and CLU. Component of a sperm activating protein complex (SPAP), consisting of APOA1, an immunoglobulin heavy chain, an immunoglobulin light chain and albumin. Interacts with NDRG1. Interacts with SCGB3A2. Interacts with NAXE and YJEFN3. Post-translationally, glycosylated. In terms of processing, palmitoylated. Phosphorylation sites are present in the extracellular medium.

The protein resides in the secreted. Participates in the reverse transport of cholesterol from tissues to the liver for excretion by promoting cholesterol efflux from tissues and by acting as a cofactor for the lecithin cholesterol acyltransferase (LCAT). As part of the SPAP complex, activates spermatozoa motility. The sequence is that of Apolipoprotein A-I (APOA1) from Chinchilla lanigera (Long-tailed chinchilla).